Consider the following 325-residue polypeptide: Melanocortin receptor 5 (325 aa).

The Extracellular segment spans residues Met1–Gly37. N-linked (GlcNAc...) asparagine glycans are attached at residues Asn2, Asn15, Asn20, and Asn28. Residues Ile38–Ile61 form a helical membrane-spanning segment. Residues Val62–Phe73 lie on the Cytoplasmic side of the membrane. Residues Phe74–Tyr97 form a helical membrane-spanning segment. Residues Leu98–Ile114 are Extracellular-facing. Residues Asp115–Val138 traverse the membrane as a helical segment. The Cytoplasmic segment spans residues Asp139–Thr155. A helical membrane pass occupies residues Ala156–Leu179. Topologically, residues Tyr180–Val186 are extracellular. Residues Ile187–Leu211 traverse the membrane as a helical segment. Topologically, residues Ala212–Thr239 are cytoplasmic. The chain crosses the membrane as a helical span at residues Val240–Pro265. Residues Gln266–Phe273 lie on the Extracellular side of the membrane. Residues Met274 to Phe297 traverse the membrane as a helical segment. Residues Arg298–Asp325 lie on the Cytoplasmic side of the membrane. 2 S-palmitoyl cysteine lipidation sites follow: Cys311 and Cys312.

This sequence belongs to the G-protein coupled receptor 1 family.

The protein localises to the cell membrane. In terms of biological role, receptor for MSH (alpha, beta and gamma) and ACTH. The activity of this receptor is mediated by G proteins which activate adenylate cyclase. This receptor is a possible mediator of the immunomodulation properties of melanocortins. The chain is Melanocortin receptor 5 (MC5R) from Pan troglodytes (Chimpanzee).